Reading from the N-terminus, the 237-residue chain is Phosphoribosylaminoimidazole-succinocarboxamide synthase (237 aa).

It belongs to the SAICAR synthetase family.

It catalyses the reaction 5-amino-1-(5-phospho-D-ribosyl)imidazole-4-carboxylate + L-aspartate + ATP = (2S)-2-[5-amino-1-(5-phospho-beta-D-ribosyl)imidazole-4-carboxamido]succinate + ADP + phosphate + 2 H(+). It participates in purine metabolism; IMP biosynthesis via de novo pathway; 5-amino-1-(5-phospho-D-ribosyl)imidazole-4-carboxamide from 5-amino-1-(5-phospho-D-ribosyl)imidazole-4-carboxylate: step 1/2. The sequence is that of Phosphoribosylaminoimidazole-succinocarboxamide synthase from Yersinia pseudotuberculosis serotype O:1b (strain IP 31758).